The sequence spans 455 residues: MAGIDRRGFLKASMASVAAAALAGCASQQGTSATPKAAGKSVMGLVVPKMAEVRVGLIGVGERGVGFIHHFNNIEGARITAICDTDPLVISRAQKIMADYGRSQPAYYSKGQQAYLDLVAREDVDIVVIATPWALHHPMAKAAMLAGKHAFVEVPMGMTIEELWDLVDTAELTQRNCMMMENVCYGRDELMVLNMVRQGLFGELLHGEAAYIHELRWQMKELDRKTGSWRTGYHAQINGNLYPTHGLGPVAQYMNINRGDRFDYLSSMSSPALGRAAYAQREFPKDHQRNQLNYICGDMNTSLIKTVKGRTIMVQHDTTTPRPYSRHNLIQGTNGVFAGFPNRIALENHGRGSFHEWDQDMEHWYGKYDHPLWTRMGREAEQNGGHGGMDFLMCWRMIYCLRNGEPLDQDVYDGAAWSAVQPLSAASVADRGNSRDFPDFTRGVWQSATPLGIVE.

The segment at residues 1-33 (MAGIDRRGFLKASMASVAAAALAGCASQQGTSA) is a signal peptide (tat-type signal). NAD(+) contacts are provided by residues 62 to 63 (ER), Asp84, Gln112, 133 to 136 (WALH), 153 to 154 (EV), and Asn182. Substrate contacts are provided by residues Tyr211, Arg230, 242 to 245 (YPTH), and Tyr324. NAD(+) is bound at residue Tyr242.

The protein belongs to the Gfo/Idh/MocA family. Glycosyl hydrolase 109 subfamily. Requires NAD(+) as cofactor. In terms of processing, predicted to be exported by the Tat system. The position of the signal peptide cleavage has not been experimentally proven.

Glycosidase. The protein is Glycosyl hydrolase family 109 protein of Shewanella amazonensis (strain ATCC BAA-1098 / SB2B).